A 919-amino-acid chain; its full sequence is Glutamate receptor ionotropic, kainate 3 (919 aa).

The first 31 residues, 1–31, serve as a signal peptide directing secretion; that stretch reads MTAPWRRLRSLVWEYWAGFLVCAFWIPDSRG. Over 32-563 the chain is Extracellular; it reads MPHVIRIGGI…VFSFLNPLSP (532 aa). Residues N70, N76, N278, N381, N415, N426, and N433 are each glycosylated (N-linked (GlcNAc...) asparagine). An intrachain disulfide couples C99 to C350. Positions 518, 520, and 525 each coordinate L-glutamate. N-linked (GlcNAc...) asparagine glycans are attached at residues N548 and N551. A helical membrane pass occupies residues 564–584; that stretch reads DIWMYVLLAYLGVSCVLFVIA. The Cytoplasmic portion of the chain corresponds to 585-636; the sequence is RFSPYEWYDAHPCNPGSEVVENNFTLLNSFWFGMGSLMQQGSELMPKALSTR. Residues 637–657 form a helical membrane-spanning segment; that stretch reads IIGGIWWFFTLIIISSYTANL. Over 658-820 the chain is Extracellular; sequence AAFLTVERME…KEASALGIQK (163 aa). The L-glutamate site is built by A691, T692, and E739. N752 carries N-linked (GlcNAc...) asparagine glycosylation. A helical membrane pass occupies residues 821 to 841; it reads IGGIFIVLAAGLVLSVLVAVG. Residues 842 to 919 lie on the Cytoplasmic side of the membrane; sequence EFIYKLRKTA…CSTSLAPVFP (78 aa). Phosphoserine is present on S869. K887 is covalently cross-linked (Glycyl lysine isopeptide (Lys-Gly) (interchain with G-Cter in SUMO1)).

It belongs to the glutamate-gated ion channel (TC 1.A.10.1) family. GRIK3 subfamily. In terms of assembly, homotetramer, and heterotetramer with either GRIK4 or GRIK5. Can form functional heteromeric receptors with GRIK2. Interacts with PRKCABP. Interacts with NETO2. In terms of tissue distribution, detected in whole brain, cerebellum, brain cortex and hippocampus.

The protein resides in the cell membrane. It localises to the postsynaptic cell membrane. It catalyses the reaction Ca(2+)(in) = Ca(2+)(out). Glutamate-gated receptor activity inhibited by spermine. Its function is as follows. Ionotropic glutamate receptor that functions as a cation-permeable ligand-gated ion channel, gated by L-glutamate and the glutamatergic agonist kainic acid. Binding of the excitatory neurotransmitter L-glutamate induces a conformation change, leading to the opening of the cation channel, and thereby converts the chemical signal to an electrical impulse. The receptor then desensitizes rapidly and enters a transient inactive state, characterized by the presence of bound agonist. In association with GRIK2, involved in presynaptic facilitation of glutamate release at hippocampal mossy fiber synapses. This is Glutamate receptor ionotropic, kainate 3 (Grik3) from Mus musculus (Mouse).